The sequence spans 620 residues: Transcription factor kayak (620 aa).

Disordered stretches follow at residues 1-36 (MKVK…SNGV) and 184-288 (SDTD…EKRR). A compositionally biased stretch (polar residues) spans 184-194 (SDTDDSNASWN). Composition is skewed to low complexity over residues 201–233 (GDTT…GANN) and 249–266 (ANNN…PAAR). The bZIP domain occupies 284-347 (EEKRRIRRER…NQLKYVIEAH (64 aa)). Residues 286–305 (KRRIRRERNKAAAARCRKRR) form a basic motif region. The interval 312–340 (LTEEVDALVKKGDTLKAEITTLTELRNQL) is leucine-zipper. A disordered region spans residues 375–414 (STGGSSCGSVHSNHSHNNNNNNNNSNDSSSGTITGFDATL). The span at 377–405 (GGSSCGSVHSNHSHNNNNNNNNSNDSSSG) shows a compositional bias: low complexity. Position 422 is a phosphoserine (Ser-422). 2 disordered regions span residues 447-466 (GLDS…AKRA) and 590-620 (SGPL…LCPL).

It belongs to the bZIP family. Fos subfamily. Homodimer. Heterodimer with Jra. The kay-Jra heterodimer binds more stably to the AP-1 site than either of the two proteins alone.

The protein localises to the nucleus. Developmentally regulated transcription factor AP-1 binds and recognizes the enhancer DNA sequence: 5'-TGA[CG]TCA-3'. May play a role in the function or determination of a particular subset of cells in the developing embryo. It is able to carry out its function either independently of or in conjunction with Jra. The sequence is that of Transcription factor kayak from Drosophila willistoni (Fruit fly).